The primary structure comprises 276 residues: Integrin-binding sialoprotein (276 aa).

The first 16 residues, 1–16 (MRSALLLACLLATASA), serve as a signal peptide directing secretion. The segment at 54 to 251 (HRYKGSDSSE…EEPARGDSYR (198 aa)) is disordered. Positions 61–75 (SSEEEGDGSEEEEEG) are enriched in acidic residues. The span at 106-119 (QDCKGGQKGTRGDS) shows a compositional bias: basic and acidic residues. Residues 116–118 (RGD) carry the Cell attachment site motif. Acidic residues predominate over residues 120 to 144 (GDEDSDEEEEEEEEEEEEEEVEEQD). Over residues 145 to 165 (VSVNGTSTNTTAETPHGNNTV) the composition is skewed to polar residues. Asn-148, Asn-153, and Asn-162 each carry an N-linked (GlcNAc...) asparagine glycan. A compositionally biased stretch (acidic residues) spans 167–188 (AEEEEDDDEEEEEEEEEEEEAE). Residues 189 to 200 (ATTAAATTAQDE) show a composition bias toward low complexity. A Cell attachment site motif is present at residues 228–230 (RGD). An Integrin-binding motif motif is present at residues 246 to 248 (RGD). 2 positions are modified to sulfotyrosine: Tyr-272 and Tyr-273.

In terms of assembly, monomer. Interacts with integrins; the interaction promotes cell adhesion. Phosphorylated on serine and threonine residues.

It localises to the secreted. Binds tightly to hydroxyapatite. Appears to form an integral part of the mineralized matrix. Probably important to cell-matrix interaction. Promotes adhesion and migration of various cells via the alpha-V/beta-3 integrin receptor (ITGAV:ITGB3). This Gallus gallus (Chicken) protein is Integrin-binding sialoprotein (IBSP).